The following is a 659-amino-acid chain: Nicastrin (659 aa).

The N-terminal stretch at 1-22 (MKIKNYFIIVFIIIVLSTDVIS) is a signal peptide. The Extracellular segment spans residues 23-627 (SQSSIEDKMY…LFQVGSYANE (605 aa)). N-linked (GlcNAc...) asparagine glycans are attached at residues Asn-94, Asn-172, Asn-305, Asn-389, Asn-451, Asn-475, Asn-550, Asn-553, and Asn-600. The chain crosses the membrane as a helical span at residues 628–648 (IWFLVSGLIELLLSVGIIFYI). The Cytoplasmic portion of the chain corresponds to 649–659 (KKYLSKRYKLL).

Belongs to the nicastrin family. Homodimer. Component of the gamma-secretase complex, a complex composed of a presenilin homodimer, nicastrin, aph1 and pen2.

The protein resides in the membrane. Functionally, essential subunit of the gamma-secretase complex, an endoprotease complex that catalyzes the intramembrane cleavage of integral membrane proteins such as Notch receptors and APP (amyloid-beta precursor protein). It probably represents a stabilizing cofactor required for the assembly of the gamma-secretase complex. The polypeptide is Nicastrin (ncstn) (Dictyostelium discoideum (Social amoeba)).